The sequence spans 281 residues: MSNILDGRELAKEIKERIKKETEILEKKPRIDFLYFEDDKSTEVYFTRAKKQAESVGMIGSLHNLPVNTTEKDFLTLIEYLNEESETSGIMIQMPLPKHISKKKVYETISIEKDADAISHVNLGRIFIGDSNLAPCTAKSAMALIEKSGINIEGANAVVIGRSEIVGKPLAHLLLQKSATVTIAHSKTKNLKELCKNADILCVSIGKAEFITGEYIKEGAVVIDVGINVLEDGSLKGDVNFEEASKLASYITPVPNGVGSVTVSMLLDNVLYLHKNIINKK.

Residues 161–163 (GRS), serine 186, and isoleucine 227 each bind NADP(+).

This sequence belongs to the tetrahydrofolate dehydrogenase/cyclohydrolase family. As to quaternary structure, homodimer.

It carries out the reaction (6R)-5,10-methylene-5,6,7,8-tetrahydrofolate + NADP(+) = (6R)-5,10-methenyltetrahydrofolate + NADPH. The enzyme catalyses (6R)-5,10-methenyltetrahydrofolate + H2O = (6R)-10-formyltetrahydrofolate + H(+). It participates in one-carbon metabolism; tetrahydrofolate interconversion. Its function is as follows. Catalyzes the oxidation of 5,10-methylenetetrahydrofolate to 5,10-methenyltetrahydrofolate and then the hydrolysis of 5,10-methenyltetrahydrofolate to 10-formyltetrahydrofolate. This chain is Bifunctional protein FolD, found in Brachyspira hyodysenteriae (strain ATCC 49526 / WA1).